Here is a 141-residue protein sequence, read N- to C-terminus: Nucleoside diphosphate kinase (141 aa).

6 residues coordinate ATP: Lys-9, Phe-57, Arg-85, Thr-91, Arg-102, and Asn-112. The active-site Pros-phosphohistidine intermediate is His-115.

Belongs to the NDK family. In terms of assembly, homotetramer. The cofactor is Mg(2+).

Its subcellular location is the cytoplasm. The enzyme catalyses a 2'-deoxyribonucleoside 5'-diphosphate + ATP = a 2'-deoxyribonucleoside 5'-triphosphate + ADP. The catalysed reaction is a ribonucleoside 5'-diphosphate + ATP = a ribonucleoside 5'-triphosphate + ADP. In terms of biological role, major role in the synthesis of nucleoside triphosphates other than ATP. The ATP gamma phosphate is transferred to the NDP beta phosphate via a ping-pong mechanism, using a phosphorylated active-site intermediate. The sequence is that of Nucleoside diphosphate kinase from Chlamydia trachomatis serovar D (strain ATCC VR-885 / DSM 19411 / UW-3/Cx).